The chain runs to 336 residues: Fructose-1,6-bisphosphatase class 1 (336 aa).

Mg(2+) is bound by residues Glu-92, Asp-115, Leu-117, and Asp-118. Residues Asp-118–Ser-121, Asn-211, Tyr-244, Tyr-262–Tyr-264, and Lys-274 each bind substrate. Glu-280 lines the Mg(2+) pocket.

Belongs to the FBPase class 1 family. In terms of assembly, homotetramer. It depends on Mg(2+) as a cofactor.

Its subcellular location is the cytoplasm. It carries out the reaction beta-D-fructose 1,6-bisphosphate + H2O = beta-D-fructose 6-phosphate + phosphate. It participates in carbohydrate biosynthesis; gluconeogenesis. In Aliivibrio fischeri (strain ATCC 700601 / ES114) (Vibrio fischeri), this protein is Fructose-1,6-bisphosphatase class 1.